The primary structure comprises 146 residues: Large ribosomal subunit protein uL15 (146 aa).

A compositionally biased stretch (basic and acidic residues) spans 1-13 (MKLHELKPAEGSR). The disordered stretch occupies residues 1–51 (MKLHELKPAEGSRKVRNRVGRGIGSGNGKTAGKGHKGQNARSGGGVRLGFE). 2 stretches are compositionally biased toward gly residues: residues 21 to 31 (RGIGSGNGKTA) and 42 to 51 (SGGGVRLGFE).

Belongs to the universal ribosomal protein uL15 family. Part of the 50S ribosomal subunit.

In terms of biological role, binds to the 23S rRNA. The polypeptide is Large ribosomal subunit protein uL15 (Bacillus cereus (strain G9842)).